The following is a 506-amino-acid chain: MIRVRPNEVTRIIRQQVKKYRQELKIVNVGTVLQVGDGIARIYGLEKVMAGELVEFDEGTIGIALNLEADNVGAVLMGEATNLKEGASVKTTGKIAQIPVGRGFLGRVVDALARPIDGKGDIASFTTRLIESPAPGIVSRRSVHEPLQTGLIAIDAMIPIGRGQRELIIGDRQTGKTAVATDTILNQKGQGVICVYVAIGQKASSVSQIVTTLEKRGAMEYTIIVAENADSSATLQYLAPYTGAALAEYFMYNGKHTLVIYDDLSKQAQAYRQMSLLLRRPPGREAYPGDVFYLHSRLLERAAKLSDELGQGSMTALPIVETQAGDVSAYIPTNVISITDGQVFLSADIFNSGIRPAINVGISVSRVGSAAQIKAMKQVAGKLKLELAQFAELEAFSQFASDLDQATQNQLARGARLRELLKQPQASPLSVADQVATIYTGINGYLDDINLEDVRGFLIELREHINNEKPTFKEIINKTKTFTQEAELLLKFTIIDLKKNFKKRIK.

170 to 177 (GDRQTGKT) contributes to the ATP binding site.

The protein belongs to the ATPase alpha/beta chains family. As to quaternary structure, F-type ATPases have 2 components, CF(1) - the catalytic core - and CF(0) - the membrane proton channel. CF(1) has five subunits: alpha(3), beta(3), gamma(1), delta(1), epsilon(1). CF(0) has four main subunits: a, b, b' and c.

It localises to the plastid. It is found in the chloroplast thylakoid membrane. The enzyme catalyses ATP + H2O + 4 H(+)(in) = ADP + phosphate + 5 H(+)(out). Produces ATP from ADP in the presence of a proton gradient across the membrane. The alpha chain is a regulatory subunit. The protein is ATP synthase subunit alpha, chloroplastic of Euglena gracilis.